A 476-amino-acid chain; its full sequence is Cysteine--tRNA ligase (476 aa).

C27 contributes to the Zn(2+) binding site. The 'HIGH' region motif lies at 29-39 (PTTYNYIHLGN). The Zn(2+) site is built by C207, H232, and E236. Residues 264–268 (KMSKS) carry the 'KMSKS' region motif. Position 267 (K267) interacts with ATP.

This sequence belongs to the class-I aminoacyl-tRNA synthetase family. As to quaternary structure, monomer. Zn(2+) is required as a cofactor.

The protein resides in the cytoplasm. It catalyses the reaction tRNA(Cys) + L-cysteine + ATP = L-cysteinyl-tRNA(Cys) + AMP + diphosphate. The protein is Cysteine--tRNA ligase of Moorella thermoacetica (strain ATCC 39073 / JCM 9320).